The sequence spans 31 residues: Hyaluronidase (31 aa).

Belongs to the glycosyl hydrolase 56 family. Post-translationally, contains 2 disulfide bonds. N-glycosylated on at least two Asn residues by identical heptasaccharide units composed of Man, GlcNAc, and Fuc residues in the molar ration of 3:2:2. As to expression, expressed by the venom gland.

The protein localises to the secreted. It catalyses the reaction Random hydrolysis of (1-&gt;4)-linkages between N-acetyl-beta-D-glucosamine and D-glucuronate residues in hyaluronate.. Its function is as follows. Hydrolyzes high molecular weight hyaluronic acid to produce small oligosaccharides. In Vespula maculifrons (Eastern yellow jacket), this protein is Hyaluronidase.